A 197-amino-acid polypeptide reads, in one-letter code: Protein FAM219B (197 aa).

Disordered stretches follow at residues 1 to 77 (MATE…HRDH) and 117 to 142 (DENLVSLDSDSDGELESRYSSGYSSA). Phosphoserine occurs at positions 14, 125, and 127.

It belongs to the FAM219 family.

The chain is Protein FAM219B (Fam219b) from Mus musculus (Mouse).